The primary structure comprises 230 residues: Heptaprenylglyceryl phosphate synthase (230 aa).

K12 lines the sn-glycerol 1-phosphate pocket. Residues D14 and T40 each coordinate Mg(2+). Sn-glycerol 1-phosphate-binding positions include 159 to 164 (YIEYSG), G189, and 209 to 210 (GD).

Belongs to the GGGP/HepGP synthase family. Group I subfamily. In terms of assembly, homodimer. Mg(2+) serves as cofactor.

It catalyses the reaction sn-glycerol 1-phosphate + all-trans-heptaprenyl diphosphate = 3-heptaprenyl-sn-glycero-1-phosphate + diphosphate. The protein operates within membrane lipid metabolism; glycerophospholipid metabolism. Functionally, prenyltransferase that catalyzes in vivo the transfer of the heptaprenyl moiety of heptaprenyl pyrophosphate (HepPP; 35 carbon atoms) to the C3 hydroxyl of sn-glycerol-1-phosphate (G1P), producing heptaprenylglyceryl phosphate (HepGP). This reaction is an ether-bond-formation step in the biosynthesis of archaea-type G1P-based membrane lipids found in Bacillales. The protein is Heptaprenylglyceryl phosphate synthase of Staphylococcus aureus (strain USA300).